A 291-amino-acid chain; its full sequence is Trimeric intracellular cation channel type B (291 aa).

The Lumenal portion of the chain corresponds to 1–15 (MESPWNELTLAFSRT). The chain crosses the membrane as a helical span at residues 16–33 (SMFPFFDIAHYLVSVMAL). The Cytoplasmic portion of the chain corresponds to 34 to 47 (KHQPGAAALAWKNP). Residues 48–69 (LSSWFTAMLHCFGGGILSCVLL) traverse the membrane as a helical segment. Residues 70–80 (AEPPLRFLANN) lie on the Lumenal side of the membrane. A helical transmembrane segment spans residues 81–100 (TNILLASSIWYIAFFCPCDL). Residues 101–103 (ISQ) lie on the Cytoplasmic side of the membrane. Residues 104-122 (AYSFLPVQLLAAGMKEVTR) traverse the membrane as a helical segment. A 1,2-diacyl-sn-glycero-3-phospho-(1D-myo-inositol-4,5-bisphosphate) contacts are provided by K118 and R122. The Lumenal portion of the chain corresponds to 123–138 (TWKIVGGVTHANSYYK). Residues 139–156 (NGWIVMIAVGWARGAGGS) traverse the membrane as a helical segment. Topologically, residues 157-179 (IITNFEQLVKGCWKPEAEEWLKM) are cytoplasmic. The helical transmembrane segment at 180 to 196 (SYPAKVTLLGSVIFTFQ) threads the bilayer. The Lumenal segment spans residues 197 to 207 (QTKYLAISKHN). Residues 208-225 (LMFLFTVFLVATKITMMI) traverse the membrane as a helical segment. Over 226–291 (TKTALVPFAC…VKKKHSKKTE (66 aa)) the chain is Cytoplasmic. Residues 257–291 (KSETKSSFNGTGSSTSKPVANASDKVKKKHSKKTE) form a disordered region. Residues 261–274 (KSSFNGTGSSTSKP) show a composition bias toward polar residues. Position 262 is a phosphoserine (S262). The segment covering 282-291 (VKKKHSKKTE) has biased composition (basic residues).

This sequence belongs to the TMEM38 family. As to quaternary structure, homotrimer; conformation seems to be controled by binding to diacylglycerol (DAG).

Its subcellular location is the endoplasmic reticulum membrane. The enzyme catalyses K(+)(in) = K(+)(out). With respect to regulation, channel activity is activated by increased cytosolic Ca(2+) levels and blocked by luminal high Ca(2+) levels. Functionally, intracellular monovalent cation channel required for maintenance of rapid intracellular calcium release. Acts as a potassium counter-ion channel that functions in synchronization with calcium release from intracellular stores. Activated by increased cytosolic Ca(2+) levels. In Bos taurus (Bovine), this protein is Trimeric intracellular cation channel type B (TMEM38B).